The following is a 280-amino-acid chain: Ribosomal RNA small subunit methyltransferase A (280 aa).

6 residues coordinate S-adenosyl-L-methionine: histidine 13, leucine 15, glycine 40, glutamate 61, aspartate 85, and asparagine 105.

The protein belongs to the class I-like SAM-binding methyltransferase superfamily. rRNA adenine N(6)-methyltransferase family. RsmA subfamily.

It is found in the cytoplasm. It carries out the reaction adenosine(1518)/adenosine(1519) in 16S rRNA + 4 S-adenosyl-L-methionine = N(6)-dimethyladenosine(1518)/N(6)-dimethyladenosine(1519) in 16S rRNA + 4 S-adenosyl-L-homocysteine + 4 H(+). Functionally, specifically dimethylates two adjacent adenosines (A1518 and A1519) in the loop of a conserved hairpin near the 3'-end of 16S rRNA in the 30S particle. May play a critical role in biogenesis of 30S subunits. This chain is Ribosomal RNA small subunit methyltransferase A, found in Phocaeicola vulgatus (strain ATCC 8482 / DSM 1447 / JCM 5826 / CCUG 4940 / NBRC 14291 / NCTC 11154) (Bacteroides vulgatus).